A 195-amino-acid polypeptide reads, in one-letter code: Small ribosomal subunit protein uS5 (195 aa).

Positions 22–85 constitute an S5 DRBM domain; it reads IVEKLVHINR…EEAKKSMIRV (64 aa). A disordered region spans residues 164-195; the sequence is QVAAKRGKKVSDVIGRRADGASAAQPAADAEG. The segment covering 172–182 has biased composition (basic and acidic residues); the sequence is KVSDVIGRRAD. The segment covering 183 to 195 has biased composition (low complexity); that stretch reads GASAAQPAADAEG.

The protein belongs to the universal ribosomal protein uS5 family. As to quaternary structure, part of the 30S ribosomal subunit. Contacts proteins S4 and S8.

Its function is as follows. With S4 and S12 plays an important role in translational accuracy. In terms of biological role, located at the back of the 30S subunit body where it stabilizes the conformation of the head with respect to the body. In Phenylobacterium zucineum (strain HLK1), this protein is Small ribosomal subunit protein uS5.